Here is a 241-residue protein sequence, read N- to C-terminus: MTLQWAAVATFLYAEIGLILIFCLPFIPPQRWQKIFSFNVWGKIATFWNKAFLTIIILLIVLFLDAVREVRKYSSVHTIEKSSTSRPDAYEHTQMKLFRSQRNLYISGFSLFFWLVLRRLVTLITQLAKELSNKGVLKTQAENTNKAAKKFMEENEKLKRILKSHGKDEECVLEAENKKLVEDQQKLKTELRKTSDALSKAQNDVMEMKMQSERLSKEYDQLLKEHSELQDRLERGNKKRL.

Residues 1–6 (MTLQWA) are Lumenal-facing. Residues 7 to 27 (AVATFLYAEIGLILIFCLPFI) traverse the membrane as a helical segment. At 28–43 (PPQRWQKIFSFNVWGK) the chain is on the cytoplasmic side. A helical transmembrane segment spans residues 44-64 (IATFWNKAFLTIIILLIVLFL). The Lumenal portion of the chain corresponds to 65-103 (DAVREVRKYSSVHTIEKSSTSRPDAYEHTQMKLFRSQRN). A helical transmembrane segment spans residues 104-124 (LYISGFSLFFWLVLRRLVTLI). Over 125–241 (TQLAKELSNK…RLERGNKKRL (117 aa)) the chain is Cytoplasmic. Positions 166–233 (GKDEECVLEA…KEHSELQDRL (68 aa)) form a coiled coil. The disordered stretch occupies residues 193 to 223 (KTSDALSKAQNDVMEMKMQSERLSKEYDQLL). Residues 206–223 (MEMKMQSERLSKEYDQLL) are compositionally biased toward basic and acidic residues. A Di-lysine motif motif is present at residues 238–241 (KKRL).

Belongs to the BCAP29/BCAP31 family. Homodimer and heterodimer with BCAP31. Binds CASP8 as a complex containing BCAP31, BCAP29, BCL2 and/or BCL2L1. Interacts with VAMP3, VAMP1 and membrane IgD immunoglobulins. May interact with ACTG1 and non-muscle myosin II.

It localises to the endoplasmic reticulum membrane. Functionally, may play a role in anterograde transport of membrane proteins from the endoplasmic reticulum to the Golgi. May be involved in CASP8-mediated apoptosis. This chain is B-cell receptor-associated protein 29 (BCAP29), found in Pongo abelii (Sumatran orangutan).